A 202-amino-acid chain; its full sequence is MTRTARIERQTSESKVLVEVDLDGTGRHDVSTGVGFYDHMLTAFARHALVDLTVQTDGDTHIDAHHTVEDTAIALGQALRQALGDKRGIRRFGDATVPLDEALVQAVVDVSGRPYCVHTGEPEGQQYVQLGGTTPAYLGSLTQHVFESIAFHGHFALHVRVLAGREPHHIVETQFKAVARAFRDAVALDPRETGIPSTKGAL.

The protein belongs to the imidazoleglycerol-phosphate dehydratase family.

The protein localises to the cytoplasm. The catalysed reaction is D-erythro-1-(imidazol-4-yl)glycerol 3-phosphate = 3-(imidazol-4-yl)-2-oxopropyl phosphate + H2O. It functions in the pathway amino-acid biosynthesis; L-histidine biosynthesis; L-histidine from 5-phospho-alpha-D-ribose 1-diphosphate: step 6/9. This chain is Imidazoleglycerol-phosphate dehydratase, found in Nocardioides sp. (strain ATCC BAA-499 / JS614).